Here is a 210-residue protein sequence, read N- to C-terminus: Holliday junction resolvase RecU (210 aa).

Residues T93, D95, E108, and Q127 each contribute to the Mg(2+) site.

Belongs to the RecU family. Mg(2+) serves as cofactor.

It localises to the cytoplasm. The catalysed reaction is Endonucleolytic cleavage at a junction such as a reciprocal single-stranded crossover between two homologous DNA duplexes (Holliday junction).. Endonuclease that resolves Holliday junction intermediates in genetic recombination. Cleaves mobile four-strand junctions by introducing symmetrical nicks in paired strands. Promotes annealing of linear ssDNA with homologous dsDNA. Required for DNA repair, homologous recombination and chromosome segregation. In Lactobacillus helveticus (strain DPC 4571), this protein is Holliday junction resolvase RecU.